The following is a 98-amino-acid chain: uncharacterized protein (98 aa).

The interval 1–63 (MPRDKKLVHR…NGHSQPAIVA (63 aa)) is disordered. A compositionally biased stretch (acidic residues) spans 14–29 (DVEDEDNDQREEEWSD). The segment covering 48 to 57 (EPSSASNGHS) has biased composition (polar residues).

This is an uncharacterized protein from Aedes vexans (Inland floodwater mosquito).